The following is a 776-amino-acid chain: MTASTQNGSPTPPPAAPTATNQESKNMTANPADASESQSPANEKGGGTAENGQKHTSTAANAKDPLRPRRKKAKRACFACQRAHLTCGDERPCQRCIKRGLQDACHDGVRKKAKYLHDAPNEALMPGIRRNFYNQANATRTNASQQQNGPNSNSNKDSRQNVAANFYSPQSASNFDVYTQAKSQQGQGHIPPTVMQDTSINPSAFQAPSPTSTPNFDLSSNPPNRNLSSAMTQTPSSASNQTQDPFGAAFFDPSHPALFNFDIASMNFGNRYGALEFGMLGHMATGAGDTPPSDSATQRGSIGRSSGTFTAQNFGDSTNTQPPFLFGDPVLNDWNPSGQSQTNPRNNNIYNQNTVAGQMGEQHPNAFAIESAPMNFASPGSTESPQMTTMNQFDEANAKFSSRTALMHQTNPHQPPPISTPGLKHQGFQVGVKRRYRSPSSIYESVKEPYSYTSGFHNLTAFIQRRFSPQKTLQIAKALASIRPSFIATTKTLNQDDLIFMEKCFQRTLWEYEDFINACGTPTIVCRRTGEIAAVGKEFSILTGWKKEVLLGKEPNLNVNTGGSSPRGSGTFTPRNGNGVDPHSGMSASGGGGGRTQPVFLAELLDDDSVIEFYEDFAKLAFGDSRGSVMTTCKLLKYKTKEDSAALFQGREAQQGGPDGKGGGGGGGDVATTAATTSTSTSNGANSSGHANANRNNTNPNNSSPPSSSSAAAAGPLHGAQLSPKQTWGKRGIAGEAGMNQLGFRDGKVECSYCWTVKRDVFDIPMLIVMNFLPCI.

A disordered region spans residues 1-70 (MTASTQNGSP…NAKDPLRPRR (70 aa)). Composition is skewed to polar residues over residues 21 to 41 (NQES…QSPA) and 50 to 60 (ENGQKHTSTAA). The zn(2)-C6 fungal-type DNA-binding region spans 77-105 (CFACQRAHLTCGDERPCQRCIKRGLQDAC). 5 disordered regions span residues 140-159 (RTNA…KDSR), 179-248 (TQAK…PFGA), 286-351 (GAGD…NIYN), 556-593 (NLNV…GGGG), and 651-726 (REAQ…SPKQ). Residues 142–155 (NASQQQNGPNSNSN) are compositionally biased toward low complexity. Positions 195-217 (MQDTSINPSAFQAPSPTSTPNFD) are enriched in polar residues. Over residues 218-229 (LSSNPPNRNLSS) the composition is skewed to low complexity. Composition is skewed to polar residues over residues 230 to 244 (AMTQ…QTQD), 292 to 322 (PSDS…NTQP), 334 to 351 (WNPS…NIYN), and 557 to 576 (LNVN…TPRN). Residues 657-669 (GPDGKGGGGGGGD) show a composition bias toward gly residues. Residues 670–714 (VATTAATTSTSTSNGANSSGHANANRNNTNPNNSSPPSSSSAAAA) are compositionally biased toward low complexity.

It belongs to the ERT1/acuK family.

It is found in the nucleus. Transcription factor which regulates nonfermentable carbon utilization. Activator of gluconeogenetic genes. This is Transcription activator of gluconeogenesis HCAG_03671 from Ajellomyces capsulatus (strain NAm1 / WU24) (Darling's disease fungus).